Consider the following 118-residue polypeptide: MARIAGVNLAIQKHVWIGLQSIYGIGRTRSRKVCDAANVAIYTKIRDLSEPEIERLRVEVGKYVIEGDLRREVGMAIKRLMDLNCYRGLRHRRGLPLRGQRTRTNARTRKGPRKAIKK.

The disordered stretch occupies residues 95-118; the sequence is LPLRGQRTRTNARTRKGPRKAIKK.

It belongs to the universal ribosomal protein uS13 family. Part of the 30S ribosomal subunit. Forms a loose heterodimer with protein S19. Forms two bridges to the 50S subunit in the 70S ribosome.

Located at the top of the head of the 30S subunit, it contacts several helices of the 16S rRNA. In the 70S ribosome it contacts the 23S rRNA (bridge B1a) and protein L5 of the 50S subunit (bridge B1b), connecting the 2 subunits; these bridges are implicated in subunit movement. Contacts the tRNAs in the A and P-sites. The polypeptide is Small ribosomal subunit protein uS13 (Xylella fastidiosa (strain 9a5c)).